The sequence spans 274 residues: Protein RecA (274 aa).

Residue Gly43–Thr50 participates in ATP binding.

This sequence belongs to the RecA family.

The protein resides in the cytoplasm. Functionally, can catalyze the hydrolysis of ATP in the presence of single-stranded DNA, the ATP-dependent uptake of single-stranded DNA by duplex DNA, and the ATP-dependent hybridization of homologous single-stranded DNAs. It interacts with LexA causing its activation and leading to its autocatalytic cleavage. The polypeptide is Protein RecA (Neisseria mucosa).